A 415-amino-acid chain; its full sequence is Serine hydroxymethyltransferase (415 aa).

(6S)-5,6,7,8-tetrahydrofolate is bound by residues Leu121 and 125–127 (GHL). The residue at position 230 (Lys230) is an N6-(pyridoxal phosphate)lysine. 355–357 (SPF) contributes to the (6S)-5,6,7,8-tetrahydrofolate binding site.

Belongs to the SHMT family. Homodimer. Requires pyridoxal 5'-phosphate as cofactor.

The protein localises to the cytoplasm. It carries out the reaction (6R)-5,10-methylene-5,6,7,8-tetrahydrofolate + glycine + H2O = (6S)-5,6,7,8-tetrahydrofolate + L-serine. The protein operates within one-carbon metabolism; tetrahydrofolate interconversion. It functions in the pathway amino-acid biosynthesis; glycine biosynthesis; glycine from L-serine: step 1/1. Functionally, catalyzes the reversible interconversion of serine and glycine with tetrahydrofolate (THF) serving as the one-carbon carrier. This reaction serves as the major source of one-carbon groups required for the biosynthesis of purines, thymidylate, methionine, and other important biomolecules. Also exhibits THF-independent aldolase activity toward beta-hydroxyamino acids, producing glycine and aldehydes, via a retro-aldol mechanism. The sequence is that of Serine hydroxymethyltransferase from Lactococcus lactis subsp. cremoris (strain MG1363).